The sequence spans 594 residues: Glutamate decarboxylase 1 (594 aa).

The span at 1–13 (MASSTPSSSATSS) shows a compositional bias: low complexity. Positions 1-25 (MASSTPSSSATSSNAGPDPNTTNLR) are disordered. A Phosphoserine modification is found at Ser78. 190–192 (QLS) lines the 4-aminobutanoate pocket. Position 405 is an N6-(pyridoxal phosphate)lysine (Lys405). Arg567 is a 4-aminobutanoate binding site.

It belongs to the group II decarboxylase family. Homodimer. The cofactor is pyridoxal 5'-phosphate.

The catalysed reaction is L-glutamate + H(+) = 4-aminobutanoate + CO2. Its function is as follows. Catalyzes the synthesis of the inhibitory neurotransmitter gamma-aminobutyric acid (GABA) with pyridoxal 5'-phosphate as cofactor. This is Glutamate decarboxylase 1 (GAD1) from Sus scrofa (Pig).